The following is a 601-amino-acid chain: ATP-dependent lipid A-core flippase (601 aa).

The next 4 helical transmembrane spans lie at 27–47 (IGLFLISIVGFLIFASTQPML), 83–103 (LLIVLIAAWQGLGSYLGNYFL), 174–194 (LLWMNWRLTLVMIAILPLIAV), and 267–287 (PLLQLVIYSAMAVLMFLVLYL). In terms of domain architecture, ABC transmembrane type-1 spans 31 to 322 (LISIVGFLIF…LSEVSSTIQK (292 aa)). Positions 354–590 (LEVRNLSFTY…NGYYSRLHAM (237 aa)) constitute an ABC transporter domain. 388–395 (GRSGSGKS) contacts ATP.

It belongs to the ABC transporter superfamily. Lipid exporter (TC 3.A.1.106) family. Homodimer.

It localises to the cell inner membrane. The enzyme catalyses ATP + H2O + lipid A-core oligosaccharideSide 1 = ADP + phosphate + lipid A-core oligosaccharideSide 2.. Involved in lipopolysaccharide (LPS) biosynthesis. Translocates lipid A-core from the inner to the outer leaflet of the inner membrane. Transmembrane domains (TMD) form a pore in the inner membrane and the ATP-binding domain (NBD) is responsible for energy generation. The sequence is that of ATP-dependent lipid A-core flippase from Pseudomonas fluorescens (strain ATCC BAA-477 / NRRL B-23932 / Pf-5).